Here is a 166-residue protein sequence, read N- to C-terminus: 3-isopropylmalate dehydratase small subunit (166 aa).

Belongs to the LeuD family. LeuD type 2 subfamily. In terms of assembly, heterodimer of LeuC and LeuD.

The catalysed reaction is (2R,3S)-3-isopropylmalate = (2S)-2-isopropylmalate. It functions in the pathway amino-acid biosynthesis; L-leucine biosynthesis; L-leucine from 3-methyl-2-oxobutanoate: step 2/4. Catalyzes the isomerization between 2-isopropylmalate and 3-isopropylmalate, via the formation of 2-isopropylmaleate. This Aliarcobacter butzleri (strain RM4018) (Arcobacter butzleri) protein is 3-isopropylmalate dehydratase small subunit.